The following is a 450-amino-acid chain: MSAIQAAWPSGTECIAKYNFHGTAEQDLPFCKGDVLTIVAVTKDPNWYKAKNKVGREGIIPANYVQKREGVKAGTKLSLMPWFHGKITREQAERLLYPPETGLFLVRESTNYPGDYTLCVSCDGKVEHYRIMYHASKLSIDEEVYFENLMQLVEHYTSDADGLCTRLIKPKVMEGTVAAQDEFYRSGWALNMKELKLLQTIGKGEFGDVMLGDYRGNKVAVKCIKNDATAQAFLAEASVMTQLRHSNLVQLLGVIVEEKGGLYIVTEYMAKGSLVDYLRSRGRSVLGGDCLLKFSLDVCEAMEYLEGNNFVHRDLAARNVLVSEDNVAKVSDFGLTKEASSTQDTGKLPVKWTAPEALREKKFSTKSDVWSFGILLWEIYSFGRVPYPRIPLKDVVPRVEKGYKMDAPDGCPPAVYEVMKNCWHLDAAMRPSFLQLREQLEHIKTHELHL.

An N-acetylserine modification is found at S2. Residues 9–70 (PSGTECIAKY…PANYVQKREG (62 aa)) enclose the SH3 domain. Residues 9–70 (PSGTECIAKY…PANYVQKREG (62 aa)) are interaction with PTPN22. Positions 82–171 (WFHGKITREQ…GLCTRLIKPK (90 aa)) constitute an SH2 domain. At Y184 the chain carries Phosphotyrosine. The region spanning 195 to 449 (LKLLQTIGKG…LEHIKTHELH (255 aa)) is the Protein kinase domain. Residues 201-209 (IGKGEFGDV) and K222 each bind ATP. Y304 is modified (phosphotyrosine). Residue D314 is the Proton acceptor of the active site. S364 bears the Phosphoserine; by PKA mark. Y416 is modified (phosphotyrosine; by autocatalysis).

The protein belongs to the protein kinase superfamily. Tyr protein kinase family. CSK subfamily. In terms of assembly, homodimer (via SH3-domain). Interacts with PTPN22. Interacts with phosphorylated SIT1, PAG1, LIME1 and TGFB1I1; these interactions serve to recruit CSK to the membrane where it can phosphorylate and inhibit Src-family kinases. Interacts with SRCIN1. Interacts with RHOH. Interacts (via SH2 domain) with SCIMP; this interaction is dependent on phosphorylation of SCIMP 'Tyr-107'. Interacts (via SH2 domain) with PRAG1 (when phosphorylated at 'Tyr-391'); this interaction prevents translocation of CSK from the cytoplasm to the membrane leading to increased activity of CSK. Interacts with LRRK1. Mg(2+) is required as a cofactor. Mn(2+) serves as cofactor. Post-translationally, phosphorylated at Ser-364 by PKA, leading to increased activity. Autophosphorylated. In terms of tissue distribution, expressed in lung and macrophages.

It localises to the cytoplasm. It is found in the cell membrane. It carries out the reaction L-tyrosyl-[protein] + ATP = O-phospho-L-tyrosyl-[protein] + ADP + H(+). Non-receptor tyrosine-protein kinase that plays an important role in the regulation of cell growth, differentiation, migration and immune response. Phosphorylates tyrosine residues located in the C-terminal tails of Src-family kinases (SFKs) including LCK, SRC, HCK, FYN, LYN, CSK or YES1. Upon tail phosphorylation, Src-family members engage in intramolecular interactions between the phosphotyrosine tail and the SH2 domain that result in an inactive conformation. To inhibit SFKs, CSK is recruited to the plasma membrane via binding to transmembrane proteins or adapter proteins located near the plasma membrane. Suppresses signaling by various surface receptors, including T-cell receptor (TCR) and B-cell receptor (BCR) by phosphorylating and maintaining inactive several positive effectors such as FYN or LCK. This Homo sapiens (Human) protein is Tyrosine-protein kinase CSK (CSK).